The following is a 350-amino-acid chain: Uroporphyrinogen decarboxylase (350 aa).

Substrate-binding positions include 23-27 (RQAGR), aspartate 73, tyrosine 150, threonine 205, and histidine 322.

Belongs to the uroporphyrinogen decarboxylase family. In terms of assembly, homodimer.

The protein localises to the cytoplasm. It catalyses the reaction uroporphyrinogen III + 4 H(+) = coproporphyrinogen III + 4 CO2. The protein operates within porphyrin-containing compound metabolism; protoporphyrin-IX biosynthesis; coproporphyrinogen-III from 5-aminolevulinate: step 4/4. Its function is as follows. Catalyzes the decarboxylation of four acetate groups of uroporphyrinogen-III to yield coproporphyrinogen-III. This is Uroporphyrinogen decarboxylase from Methylococcus capsulatus (strain ATCC 33009 / NCIMB 11132 / Bath).